The chain runs to 820 residues: Sucrose synthase 2 (820 aa).

The GT-B glycosyltransferase stretch occupies residues 276-753 (MVFNVVILSP…GLKRIYEKYT (478 aa)).

The protein belongs to the glycosyltransferase 1 family. Plant sucrose synthase subfamily.

The enzyme catalyses an NDP-alpha-D-glucose + D-fructose = a ribonucleoside 5'-diphosphate + sucrose + H(+). Sucrose-cleaving enzyme that provides UDP-glucose and fructose for various metabolic pathways. The sequence is that of Sucrose synthase 2 from Tulipa gesneriana (Garden tulip).